A 748-amino-acid chain; its full sequence is WD repeat-containing protein 91 (748 aa).

Residues 183–228 (QRTNQVQEENEVLRQKLFALQAEIHRLKKEEQQQEEEAAALVQHKL) are a coiled coil. Ser-257 carries the phosphoserine modification. Positions 266–279 (LLPQSKKSPSRLSP) are enriched in low complexity. Positions 266-368 (LLPQSKKSPS…PEVSGAEAEP (103 aa)) are disordered. Residues 284–300 (PQAQSSAKKDSFSSQAT) are compositionally biased toward polar residues. Phosphoserine is present on residues Ser-289 and Ser-294. Positions 333–344 (RLQDHGKERREL) are enriched in basic and acidic residues. The span at 345-354 (LSTSSSQSQC) shows a compositional bias: polar residues. WD repeat units follow at residues 407–446 (EHHSSIMHCRVDCSGRRVASLDVDGVIKVWSFNPIMQTKA), 449–489 (ISKS…NLCE), 512–556 (VCSA…QQLQ), 561–600 (PEPIAINCTAFNHNGNLLVTGAADGVIRLFDMQQHECAMS), 603–642 (AHCGEVYSVEFSCDENAVYSIGEDRKFIQWNIHKSGLKVS), 665–703 (VQVPRGRLFAFDSEGNYMLTCSATGGLIYKLGSEEKVLE), and 710–748 (GHRAPVVTVDWSTAMDCGTCLTASMDGKIKLTTLLAHKL).

The protein belongs to the WD repeat WDR91 family. In terms of assembly, interacts with WDR81; involved in early to late endosome cargo transport. Interacts with BECN1; negatively regulates the PI3 kinase/PI3K activity associated with endosomal membranes.

Its subcellular location is the early endosome membrane. The protein localises to the late endosome membrane. Its function is as follows. Functions as a negative regulator of the PI3 kinase/PI3K activity associated with endosomal membranes via BECN1, a core subunit of the PI3K complex. By modifying the phosphatidylinositol 3-phosphate/PtdInsP3 content of endosomal membranes may regulate endosome fusion, recycling, sorting and early to late endosome transport. It is for instance, required for the delivery of cargos like BST2/tetherin from early to late endosome and thereby participates indirectly to their degradation by the lysosome. May play a role in meiosis. The polypeptide is WD repeat-containing protein 91 (Mus musculus (Mouse)).